Here is a 142-residue protein sequence, read N- to C-terminus: MIKKNKNDLNEMEYLVTQENGTEPPFQNEYWNHFEKGIYVDKISGKPLFTSEEKFESDCGWPSFSKALADEEIVELVDKTFGMVRTEVRSEDANSHLGHVFNDGPKESGGLRYCINSAAVQFIPYEKLEELGYGDLIPHFEK.

The 124-residue stretch at 2-125 folds into the MsrB domain; sequence IKKNKNDLNE…NSAAVQFIPY (124 aa). The Nucleophile role is filled by Cys-114.

Belongs to the MsrB Met sulfoxide reductase family.

The catalysed reaction is L-methionyl-[protein] + [thioredoxin]-disulfide + H2O = L-methionyl-(R)-S-oxide-[protein] + [thioredoxin]-dithiol. The protein is Peptide methionine sulfoxide reductase MsrB of Staphylococcus saprophyticus subsp. saprophyticus (strain ATCC 15305 / DSM 20229 / NCIMB 8711 / NCTC 7292 / S-41).